The following is an 816-amino-acid chain: Protein EFR3 homolog B (816 aa).

Residues serine 206–glutamine 219 show a composition bias toward polar residues. Positions serine 206–glutamate 230 are disordered. Positions serine 221 to glutamate 230 are enriched in basic and acidic residues.

This sequence belongs to the EFR3 family. As to quaternary structure, component of a phosphatidylinositol 4-kinase (PI4K) complex. In terms of processing, palmitoylated at its N-terminus, anchoring the protein to the plasma membrane.

The protein resides in the cell membrane. Component of a complex required to localize phosphatidylinositol 4-kinase (PI4K) to the plasma membrane. The complex acts as a regulator of phosphatidylinositol 4-phosphate (PtdIns(4)P) synthesis. In the complex, efr3b probably acts as the membrane-anchoring component. The chain is Protein EFR3 homolog B (efr3b) from Danio rerio (Zebrafish).